Here is a 580-residue protein sequence, read N- to C-terminus: Thymidine kinase (580 aa).

Disordered stretches follow at residues Met1–Lys60 and Val133–Gly157. Residues Pro137 to Thr149 show a composition bias toward pro residues. Residue Gly260–Ser267 coordinates ATP. Glu287 serves as the catalytic Proton acceptor. Gln325 provides a ligand contact to substrate. Position 415 (Arg415) interacts with ATP. Residue Arg421 participates in substrate binding.

Belongs to the herpesviridae thymidine kinase family. In terms of assembly, homodimer.

The enzyme catalyses thymidine + ATP = dTMP + ADP + H(+). Its function is as follows. Catalyzes the transfer of the gamma-phospho group of ATP to thymidine to generate dTMP in the salvage pathway of pyrimidine synthesis. The dTMP serves as a substrate for DNA polymerase during viral DNA replication. Allows the virus to be reactivated and to grow in non-proliferative cells lacking a high concentration of phosphorylated nucleic acid precursors. The sequence is that of Thymidine kinase from Human herpesvirus 8 type P (isolate GK18) (HHV-8).